Consider the following 496-residue polypeptide: Probable cytosol aminopeptidase (496 aa).

Positions 262 and 267 each coordinate Mn(2+). Lysine 274 is a catalytic residue. Mn(2+) contacts are provided by aspartate 285, aspartate 344, and glutamate 346. Residue arginine 348 is part of the active site.

The protein belongs to the peptidase M17 family. The cofactor is Mn(2+).

It is found in the cytoplasm. It catalyses the reaction Release of an N-terminal amino acid, Xaa-|-Yaa-, in which Xaa is preferably Leu, but may be other amino acids including Pro although not Arg or Lys, and Yaa may be Pro. Amino acid amides and methyl esters are also readily hydrolyzed, but rates on arylamides are exceedingly low.. The catalysed reaction is Release of an N-terminal amino acid, preferentially leucine, but not glutamic or aspartic acids.. Its function is as follows. Presumably involved in the processing and regular turnover of intracellular proteins. Catalyzes the removal of unsubstituted N-terminal amino acids from various peptides. In Rhizobium leguminosarum bv. trifolii (strain WSM2304), this protein is Probable cytosol aminopeptidase.